The following is a 138-amino-acid chain: MSLTVRVIAADKTVWDSAAEEVILPSTTGQLGILSGHAPLLSALDVGVMRVRPGKDWVSIALMGGFVEVENDEVVILVNGAERGDTIDREEARSTLSAAQARLDQSEQSEDKQERYEAQRDFKRARARLQASGEVVNI.

Residues 88–119 (DREEARSTLSAAQARLDQSEQSEDKQERYEAQ) form a disordered region. Over residues 109 to 119 (SEDKQERYEAQ) the composition is skewed to basic and acidic residues.

Belongs to the ATPase epsilon chain family. In terms of assembly, F-type ATPases have 2 components, CF(1) - the catalytic core - and CF(0) - the membrane proton channel. CF(1) has five subunits: alpha(3), beta(3), gamma(1), delta(1), epsilon(1). CF(0) has three main subunits: a, b and c.

The protein localises to the cellular thylakoid membrane. Produces ATP from ADP in the presence of a proton gradient across the membrane. The chain is ATP synthase epsilon chain from Acaryochloris marina (strain MBIC 11017).